The sequence spans 206 residues: Macrophage immunometabolism regulator (206 aa).

Met1 is subject to N-acetylmethionine. The tract at residues 1–41 (MEVDINGESRSTLTTLPFPGAEANSPGKAEAEKPRCSSTPC) is disordered. Ser25, Ser140, and Ser167 each carry phosphoserine.

Belongs to the UNC119-binding protein family. As to quaternary structure, interacts with UNC119 and UNC119B; interaction preferentially takes place when UNC119 and UNC119B are unliganded with myristoylated proteins.

The protein localises to the cytoplasm. The protein resides in the cell projection. It localises to the cilium. Functionally, regulates the macrophage function, by enhancing the resolution of inflammation and wound repair functions mediated by M2 macrophages. The regulation of macrophage function is, due at least in part, to its ability to inhibit glycolysis. May also play a role in trafficking of proteins via its interaction with UNC119 and UNC119B cargo adapters: may help the release of UNC119 and UNC119B cargo or the recycling of UNC119 and UNC119B. May play a role in ciliary membrane localization via its interaction with UNC119B and protein transport into photoreceptor cells. The polypeptide is Macrophage immunometabolism regulator (MACIR) (Pongo abelii (Sumatran orangutan)).